Reading from the N-terminus, the 95-residue chain is Protein TusB (95 aa).

The protein belongs to the DsrH/TusB family. Heterohexamer, formed by a dimer of trimers. The hexameric TusBCD complex contains 2 copies each of TusB, TusC and TusD. The TusBCD complex interacts with TusE.

Its subcellular location is the cytoplasm. Part of a sulfur-relay system required for 2-thiolation of 5-methylaminomethyl-2-thiouridine (mnm(5)s(2)U) at tRNA wobble positions. This chain is Protein TusB, found in Pectobacterium carotovorum subsp. carotovorum (strain PC1).